Consider the following 175-residue polypeptide: Peptide deformylase (175 aa).

Positions 92 and 134 each coordinate Fe cation. Residue Glu-135 is part of the active site. His-138 is a binding site for Fe cation.

Belongs to the polypeptide deformylase family. It depends on Fe(2+) as a cofactor.

It catalyses the reaction N-terminal N-formyl-L-methionyl-[peptide] + H2O = N-terminal L-methionyl-[peptide] + formate. Functionally, removes the formyl group from the N-terminal Met of newly synthesized proteins. Requires at least a dipeptide for an efficient rate of reaction. N-terminal L-methionine is a prerequisite for activity but the enzyme has broad specificity at other positions. This chain is Peptide deformylase, found in Blochmanniella floridana.